The following is a 100-amino-acid chain: UPF0213 protein YhbQ (100 aa).

The GIY-YIG domain maps to 2–77 (TPWYLYLIRT…KQLTKRQKER (76 aa)).

The protein belongs to the UPF0213 family.

This Escherichia coli O8 (strain IAI1) protein is UPF0213 protein YhbQ.